We begin with the raw amino-acid sequence, 513 residues long: E3 ubiquitin-protein ligase XBAT33 (513 aa).

ANK repeat units follow at residues 44–73, 77–106, 111–140, 171–200, and 214–244; these read GLNSPLHFAAAKGHNEIVGLLLENGADVNS, CGQTALMQACRYGHWEVVQTLLLFRCNVTR, AGRTALHFAAVNGHARCIRLVLADFLPSDK, GGITALHMAALNGLFDCVQLLLDLEANVSA, and AGSTPLHYAACGGNLKCCQILLARGARKMTL. The segment at 312–362 adopts an RING-type zinc-finger fold; the sequence is CAVCLERTCTVAAEGCEHQLCVRCALYLCSSSNVPSVTVGPPGSIPCPLCR. 2 disordered regions span residues 397–417 and 455–483; these read DTTDQSSPTCPPTEQRSSKTR and HGTERHSEEHVESSPSRTTTEQEKIEEGQ. 2 stretches are compositionally biased toward basic and acidic residues: residues 455–466 and 474–483; these read HGTERHSEEHVE and TEQEKIEEGQ.

It carries out the reaction S-ubiquitinyl-[E2 ubiquitin-conjugating enzyme]-L-cysteine + [acceptor protein]-L-lysine = [E2 ubiquitin-conjugating enzyme]-L-cysteine + N(6)-ubiquitinyl-[acceptor protein]-L-lysine.. It functions in the pathway protein modification; protein ubiquitination. Functionally, possesses E3 ubiquitin-protein ligase activity when associated with the E2 enzyme UBC8 in vitro. This chain is E3 ubiquitin-protein ligase XBAT33 (XBAT33), found in Arabidopsis thaliana (Mouse-ear cress).